A 455-amino-acid chain; its full sequence is Glutamyl-tRNA(Gln) amidotransferase subunit A (455 aa).

Catalysis depends on charge relay system residues Lys74 and Ser149. The active-site Acyl-ester intermediate is the Ser173.

Belongs to the amidase family. GatA subfamily. Heterotrimer of A, B and C subunits.

It catalyses the reaction L-glutamyl-tRNA(Gln) + L-glutamine + ATP + H2O = L-glutaminyl-tRNA(Gln) + L-glutamate + ADP + phosphate + H(+). Its function is as follows. Allows the formation of correctly charged Gln-tRNA(Gln) through the transamidation of misacylated Glu-tRNA(Gln) in organisms which lack glutaminyl-tRNA synthetase. The reaction takes place in the presence of glutamine and ATP through an activated gamma-phospho-Glu-tRNA(Gln). In Methanosphaera stadtmanae (strain ATCC 43021 / DSM 3091 / JCM 11832 / MCB-3), this protein is Glutamyl-tRNA(Gln) amidotransferase subunit A.